Reading from the N-terminus, the 221-residue chain is MSTEPNSPFVDDPLSAVDARILGSLVEKQATTPETYPLTLNALVLACNQKTSRDPVMNLTPGQVGQSLRQLEGRGLVRLVMGSRADRWEHTLGKGLELVAPQVALLGLLFLRGPQTLNELLTRSNRLHDFDDVEQIRHHLERLAGRGLAVHLERRAGQREERYMHLLGSQADLEAAVEAMGSDPERAAPAALSADAEARIAELETRLAALEERLARLEGGA.

The protein belongs to the UPF0502 family.

The protein is UPF0502 protein PLES_16071 of Pseudomonas aeruginosa (strain LESB58).